Reading from the N-terminus, the 530-residue chain is Probable 1,4-beta-D-glucan cellobiohydrolase B (530 aa).

Positions 1–26 are cleaved as a signal peptide; sequence MLASTFSYRMYKTALILAALLGSGQA. Residues 27–461 are catalytic; the sequence is QQVGTSQAEV…SNIKVGPIGS (435 aa). The Nucleophile role is filled by glutamate 238. Residue glutamate 243 is the Proton donor of the active site. Residue asparagine 296 is glycosylated (N-linked (GlcNAc...) asparagine). The interval 462-492 is disordered; that stretch reads TFNSGGSNPGGGTTTTAKPTTTTTTAGSPGG. A ser/Thr-rich linker region spans residues 462 to 494; sequence TFNSGGSNPGGGTTTTAKPTTTTTTAGSPGGTG. Positions 475–488 are enriched in low complexity; the sequence is TTTAKPTTTTTTAG. The CBM1 domain maps to 494–530; that stretch reads GVAQHYGQCGGNGWQGPTTCASPYTCQKLNDFYSQCL. Disulfide bonds link cysteine 502–cysteine 519 and cysteine 513–cysteine 529.

The protein belongs to the glycosyl hydrolase 7 (cellulase C) family.

It localises to the secreted. It catalyses the reaction Hydrolysis of (1-&gt;4)-beta-D-glucosidic linkages in cellulose and cellotetraose, releasing cellobiose from the non-reducing ends of the chains.. Functionally, the biological conversion of cellulose to glucose generally requires three types of hydrolytic enzymes: (1) Endoglucanases which cut internal beta-1,4-glucosidic bonds; (2) Exocellobiohydrolases that cut the disaccharide cellobiose from the non-reducing end of the cellulose polymer chain; (3) Beta-1,4-glucosidases which hydrolyze the cellobiose and other short cello-oligosaccharides to glucose. In Neosartorya fischeri (strain ATCC 1020 / DSM 3700 / CBS 544.65 / FGSC A1164 / JCM 1740 / NRRL 181 / WB 181) (Aspergillus fischerianus), this protein is Probable 1,4-beta-D-glucan cellobiohydrolase B (cbhB).